A 441-amino-acid polypeptide reads, in one-letter code: CBL-interacting serine/threonine-protein kinase 3 (441 aa).

Residues Tyr-14–Phe-269 enclose the Protein kinase domain. ATP contacts are provided by residues Ile-20–Val-28 and Lys-43. Residue Asp-137 is the Proton acceptor of the active site. Positions Asp-155–Glu-184 are activation loop. The NAF domain maps to Glu-307–Asp-331. The interval Lys-337 to Val-366 is PPI.

This sequence belongs to the protein kinase superfamily. CAMK Ser/Thr protein kinase family. SNF1 subfamily. In terms of assembly, interacts with CBL3 and CBL9. It depends on Mn(2+) as a cofactor. As to expression, mostly expressed in germinating seeds and young seedlings. Detected at low levels in roots, stems, leaves and flowers.

It catalyses the reaction L-seryl-[protein] + ATP = O-phospho-L-seryl-[protein] + ADP + H(+). The enzyme catalyses L-threonyl-[protein] + ATP = O-phospho-L-threonyl-[protein] + ADP + H(+). In terms of biological role, involved in the resistance to some abiotic stresses (e.g. high salt, hyperosmotic stress) in young seedlings, by regulating the expression of several stress-inducible genes (cold- and salt-induced genes but not drought-responsive genes). Required for the ABA response during germination. CIPK serine-threonine protein kinases interact with CBL proteins. Binding of a CBL protein to the regulatory NAF domain of CIPK protein lead to the activation of the kinase in a calcium-dependent manner. The CBL9/CIPK3 complex acts in the regulation of abscisic acid response in seed germination. The chain is CBL-interacting serine/threonine-protein kinase 3 (CIPK3) from Arabidopsis thaliana (Mouse-ear cress).